Consider the following 259-residue polypeptide: tRNA pseudouridine synthase A (259 aa).

Residue Asp50 is the Nucleophile of the active site. Tyr101 provides a ligand contact to substrate.

This sequence belongs to the tRNA pseudouridine synthase TruA family.

It catalyses the reaction uridine(38/39/40) in tRNA = pseudouridine(38/39/40) in tRNA. Functionally, formation of pseudouridine at positions 38, 39 and 40 in the anticodon stem and loop of transfer RNAs. The polypeptide is tRNA pseudouridine synthase A (Methanocaldococcus jannaschii (strain ATCC 43067 / DSM 2661 / JAL-1 / JCM 10045 / NBRC 100440) (Methanococcus jannaschii)).